A 546-amino-acid polypeptide reads, in one-letter code: Phosphomethylpyrimidine synthase (546 aa).

The segment covering 1–19 (MSTPSSRSQAPETVTTGPI) has biased composition (polar residues). Positions 1–20 (MSTPSSRSQAPETVTTGPIQ) are disordered. Residues Asn146, Met175, Tyr204, His240, 260–262 (SRG), 301–304 (DGLR), and Glu340 contribute to the substrate site. His344 is a Zn(2+) binding site. Substrate is bound at residue Tyr367. Position 408 (His408) interacts with Zn(2+). 3 residues coordinate [4Fe-4S] cluster: Cys488, Cys491, and Cys496.

This sequence belongs to the ThiC family. It depends on [4Fe-4S] cluster as a cofactor.

It catalyses the reaction 5-amino-1-(5-phospho-beta-D-ribosyl)imidazole + S-adenosyl-L-methionine = 4-amino-2-methyl-5-(phosphooxymethyl)pyrimidine + CO + 5'-deoxyadenosine + formate + L-methionine + 3 H(+). It functions in the pathway cofactor biosynthesis; thiamine diphosphate biosynthesis. Catalyzes the synthesis of the hydroxymethylpyrimidine phosphate (HMP-P) moiety of thiamine from aminoimidazole ribotide (AIR) in a radical S-adenosyl-L-methionine (SAM)-dependent reaction. The polypeptide is Phosphomethylpyrimidine synthase (Mycobacteroides abscessus (strain ATCC 19977 / DSM 44196 / CCUG 20993 / CIP 104536 / JCM 13569 / NCTC 13031 / TMC 1543 / L948) (Mycobacterium abscessus)).